Consider the following 429-residue polypeptide: Alpha-galactosidase A (429 aa).

Residues 1–31 (MQLRNPELHLGCALALRFLALVSWDIPGARA) form the signal peptide. 2 disulfide bridges follow: Cys52–Cys94 and Cys56–Cys63. N-linked (GlcNAc...) asparagine glycosylation occurs at Asn139. Cys142 and Cys172 are joined by a disulfide. Asp170 acts as the Nucleophile in catalysis. Residue Asn192 is glycosylated (N-linked (GlcNAc...) asparagine). Cys202 and Cys223 are oxidised to a cystine. 203–207 (EWPLY) provides a ligand contact to substrate. An N-linked (GlcNAc...) asparagine glycan is attached at Asn215. Catalysis depends on Asp231, which acts as the Proton donor. An intrachain disulfide couples Cys378 to Cys382.

It belongs to the glycosyl hydrolase 27 family. Homodimer.

Its subcellular location is the lysosome. It carries out the reaction Hydrolysis of terminal, non-reducing alpha-D-galactose residues in alpha-D-galactosides, including galactose oligosaccharides, galactomannans and galactolipids.. The enzyme catalyses a globoside Gb3Cer (d18:1(4E)) + H2O = a beta-D-Gal-(1-&gt;4)-beta-D-Glc-(1&lt;-&gt;1)-Cer(d18:1(4E)) + D-galactose. It catalyses the reaction a globoside Gb3Cer + H2O = a beta-D-galactosyl-(1-&gt;4)-beta-D-glucosyl-(1&lt;-&gt;1)-ceramide + D-galactose. Galactosylgalactosylglucosylceramidase activity is stimulated by saposin B and ammonium chloride. Catalyzes the hydrolysis of glycosphingolipids and participates in their degradation in the lysosome. The chain is Alpha-galactosidase A from Homo sapiens (Human).